The sequence spans 584 residues: POTE ankyrin domain family member D (584 aa).

ANK repeat units follow at residues 172-201 (EKRTALHLASANGNSEVVQLLLDRRCQLNV), 205-234 (KKRTALIKAIQCQEDECVLMLLEHGADRNI), 238-267 (YGNTALHYAIYNEDKLMAKALLLYGADIES), 271-300 (CGLTPLLLGVHEQKQQVVKFLIKKKANLNV), 304-333 (YGRTALILAVCCGSASIVNLLLEQNVDVSS), and 337-366 (SGQTAREYAVSSHHHVICELLSDYKEKQML). The tract at residues 369 to 502 (SSENSNPEQD…ILTNKQKQIE (134 aa)) is disordered. Basic and acidic residues-rich tracts occupy residues 377–392 (QDLKLTSEEESQRLKV), 401–412 (MSQEPEINKDCD), and 466–481 (EEYHSDEQNDTRKQLS). Positions 482–498 (EEQNTGISQDEILTNKQ) are enriched in polar residues. A coiled-coil region spans residues 494–583 (LTNKQKQIEV…LNEEALTKTN (90 aa)).

This sequence belongs to the POTE family. As to expression, expressed in prostate, ovary, testis, placenta and prostate cancer cell lines. Localizes to basal and terminal prostate epithelial cells.

It localises to the cell membrane. The sequence is that of POTE ankyrin domain family member D (POTED) from Homo sapiens (Human).